A 386-amino-acid polypeptide reads, in one-letter code: Probable Xaa-Pro aminopeptidase PMAA_074180 (386 aa).

Mn(2+) is bound by residues Asp160, Asp171, Glu311, and Glu350.

The protein belongs to the peptidase M24B family. It depends on Mn(2+) as a cofactor.

It catalyses the reaction Release of any N-terminal amino acid, including proline, that is linked to proline, even from a dipeptide or tripeptide.. In terms of biological role, catalyzes the removal of a penultimate prolyl residue from the N-termini of peptides. This Talaromyces marneffei (strain ATCC 18224 / CBS 334.59 / QM 7333) (Penicillium marneffei) protein is Probable Xaa-Pro aminopeptidase PMAA_074180.